The sequence spans 68 residues: Probable tautomerase Cj0270 (68 aa).

Pro2 (proton acceptor; via imino nitrogen) is an active-site residue.

This sequence belongs to the 4-oxalocrotonate tautomerase family.

This is Probable tautomerase Cj0270 from Campylobacter jejuni subsp. jejuni serotype O:2 (strain ATCC 700819 / NCTC 11168).